Reading from the N-terminus, the 308-residue chain is Protein translocase subunit SecF (308 aa).

A run of 6 helical transmembrane segments spans residues 14 to 34 (FFLL…LFGF), 134 to 154 (VYAV…RFEF), 158 to 178 (ISGI…FALL), 185 to 205 (TFVA…IVIF), 238 to 258 (SIRT…FGGI), and 267 to 287 (LIIG…PIWV).

The protein belongs to the SecD/SecF family. SecF subfamily. Forms a complex with SecD. Part of the essential Sec protein translocation apparatus which comprises SecA, SecYEG and auxiliary proteins SecDF. Other proteins may also be involved.

It localises to the cell membrane. Its function is as follows. Part of the Sec protein translocase complex. Interacts with the SecYEG preprotein conducting channel. SecDF uses the proton motive force (PMF) to complete protein translocation after the ATP-dependent function of SecA. The polypeptide is Protein translocase subunit SecF (Alicyclobacillus acidocaldarius subsp. acidocaldarius (strain ATCC 27009 / DSM 446 / BCRC 14685 / JCM 5260 / KCTC 1825 / NBRC 15652 / NCIMB 11725 / NRRL B-14509 / 104-IA) (Bacillus acidocaldarius)).